The following is a 195-amino-acid chain: MSIPLILASASPARKKLLQMVGIDPIVRVSNFDESTINADDTLHLVQTLAQCKAQTIAPKFDTGLILGCDSVLEVAGEVYGKPKDKSEAIERWQKMRGQVGTLYTGHALIDRVNNQTLTRCGITKVHFANISDETIIAYVDTEEPLKCAGCFALEGKGGLFVERLEGCHSNVIGLSLPLFRQMLTDFGYQITDFW.

The Proton acceptor role is filled by Asp70.

It belongs to the Maf family. A divalent metal cation serves as cofactor.

The protein localises to the cytoplasm. It carries out the reaction a ribonucleoside 5'-triphosphate + H2O = a ribonucleoside 5'-phosphate + diphosphate + H(+). It catalyses the reaction a 2'-deoxyribonucleoside 5'-triphosphate + H2O = a 2'-deoxyribonucleoside 5'-phosphate + diphosphate + H(+). In terms of biological role, nucleoside triphosphate pyrophosphatase. May have a dual role in cell division arrest and in preventing the incorporation of modified nucleotides into cellular nucleic acids. The polypeptide is Nucleoside triphosphate pyrophosphatase (Microcystis aeruginosa (strain NIES-843 / IAM M-2473)).